We begin with the raw amino-acid sequence, 185 residues long: Ribosome-recycling factor (185 aa).

This sequence belongs to the RRF family.

It is found in the cytoplasm. In terms of biological role, responsible for the release of ribosomes from messenger RNA at the termination of protein biosynthesis. May increase the efficiency of translation by recycling ribosomes from one round of translation to another. This chain is Ribosome-recycling factor, found in Geobacter sp. (strain M21).